We begin with the raw amino-acid sequence, 901 residues long: HTH-type transcriptional regulator MalT (901 aa).

ATP is bound at residue 39 to 46 (SPAGYGKT). One can recognise an HTH luxR-type domain in the interval 829–894 (ELIRTSPLTQ…AAVQHAQKLL (66 aa)). Residues 853-872 (NEQIAGELEVAATTIKTHIR) constitute a DNA-binding region (H-T-H motif).

Belongs to the MalT family. In terms of assembly, monomer in solution. Oligomerizes to an active state in the presence of the positive effectors ATP and maltotriose.

Activated by ATP and maltotriose, which are both required for DNA binding. Its function is as follows. Positively regulates the transcription of the maltose regulon whose gene products are responsible for uptake and catabolism of malto-oligosaccharides. Specifically binds to the promoter region of its target genes, recognizing a short DNA motif called the MalT box. This Escherichia coli O6:K15:H31 (strain 536 / UPEC) protein is HTH-type transcriptional regulator MalT.